We begin with the raw amino-acid sequence, 271 residues long: MTVKQSEASRLGPIFDVCRDDGRAALIGYLPTGYPDVTTSVHAMVALVESGCDIVEVGVPYSDPGMDGPTIVKATEAALHGGVRVRDTLAAVEAISAAGGHAVVMTYWNPVLRYGIDAFARDLASAGGYGLITPDLIPDEAGQWLAASEEHRLDRIFLVAPSSTPQRLAMTVEASRGFVYAASTMGVTGARDVVSNAAPELVGRVKEISDIPVGVGLGVRSGEQAAQIGGYADGVIVGSALVSALGDGGLTALRALTEELAAGVRQRAAAS.

Active-site proton acceptor residues include E56 and D67.

Belongs to the TrpA family. In terms of assembly, tetramer of two alpha and two beta chains.

The enzyme catalyses (1S,2R)-1-C-(indol-3-yl)glycerol 3-phosphate + L-serine = D-glyceraldehyde 3-phosphate + L-tryptophan + H2O. It participates in amino-acid biosynthesis; L-tryptophan biosynthesis; L-tryptophan from chorismate: step 5/5. In terms of biological role, the alpha subunit is responsible for the aldol cleavage of indoleglycerol phosphate to indole and glyceraldehyde 3-phosphate. The protein is Tryptophan synthase alpha chain of Mycobacterium intracellulare.